Here is an 801-residue protein sequence, read N- to C-terminus: Probable inorganic carbon transporter subunit DabA (801 aa).

Residues Cys298, Asp300, His481, and Cys496 each coordinate Zn(2+). The segment at Arg575–Glu596 is disordered.

Belongs to the inorganic carbon transporter (TC 9.A.2) DabA family. Forms a complex with DabB. Zn(2+) serves as cofactor.

It localises to the cell membrane. Part of an energy-coupled inorganic carbon pump. The polypeptide is Probable inorganic carbon transporter subunit DabA (Haloarcula marismortui (strain ATCC 43049 / DSM 3752 / JCM 8966 / VKM B-1809) (Halobacterium marismortui)).